The primary structure comprises 238 residues: Orotidine 5'-phosphate decarboxylase (238 aa).

Residues D10, K32, 59 to 68, T122, R184, Q193, G213, and R214 each bind substrate; that span reads DLKLHDIPNT. Catalysis depends on K61, which acts as the Proton donor.

Belongs to the OMP decarboxylase family. Type 1 subfamily. In terms of assembly, homodimer.

The enzyme catalyses orotidine 5'-phosphate + H(+) = UMP + CO2. It functions in the pathway pyrimidine metabolism; UMP biosynthesis via de novo pathway; UMP from orotate: step 2/2. Functionally, catalyzes the decarboxylation of orotidine 5'-monophosphate (OMP) to uridine 5'-monophosphate (UMP). The chain is Orotidine 5'-phosphate decarboxylase from Bacillus cytotoxicus (strain DSM 22905 / CIP 110041 / 391-98 / NVH 391-98).